The following is a 201-amino-acid chain: Twist-related protein 1 (201 aa).

Positions 1-18 (MMQDVSSSPVSPADDSLS) are enriched in low complexity. Residues 1–106 (MMQDVSSSPV…GGGSPQSYEE (106 aa)) form a disordered region. A compositionally biased stretch (basic residues) spans 34–43 (RGGRKRRSSR). Gly residues-rich tracts occupy residues 46–65 (AGGG…GGDE) and 80–100 (GCGG…GGGS). The bHLH domain occupies 109–160 (TQRVMANVRERQRTQSLNEAFAALPKIIPTLPSDKLSKIQTLKLAARYIDFL). Positions 162–190 (QVLQSDELDSKMASYVAHERLSYAFSVWR) are sufficient for transactivation activity.

Efficient DNA binding requires dimerization with another bHLH protein. Homodimer or heterodimer with E proteins such as TCF3. ID1 binds preferentially to TCF3 but does not interact efficiently with TWIST1 so ID1 levels control the amount of TCF3 available to dimerize with TWIST and thus determine the type of dimer formed.

Its subcellular location is the nucleus. Functionally, acts as a transcriptional regulator. Inhibits myogenesis by sequestrating E proteins, inhibiting trans-activation by MEF2, and inhibiting DNA-binding by MYOD1 through physical interaction. This interaction probably involves the basic domains of both proteins. Also represses expression of pro-inflammatory cytokines such as TNFA and IL1B. Regulates cranial suture patterning and fusion. Activates transcription as a heterodimer with E proteins. Regulates gene expression differentially, depending on dimer composition. Homodimers induce expression of FGFR2 and POSTN while heterodimers repress FGFR2 and POSTN expression and induce THBS1 expression. Heterodimerization is also required for osteoblast differentiation. Represses the activity of the circadian transcriptional activator: NPAS2-BMAL1 heterodimer. The polypeptide is Twist-related protein 1 (TWIST1) (Pan troglodytes (Chimpanzee)).